A 299-amino-acid chain; its full sequence is ATP phosphoribosyltransferase (299 aa).

This sequence belongs to the ATP phosphoribosyltransferase family. Long subfamily. As to quaternary structure, equilibrium between an active dimeric form, an inactive hexameric form and higher aggregates. Interconversion between the various forms is largely reversible and is influenced by the natural substrates and inhibitors of the enzyme. Requires Mg(2+) as cofactor.

It localises to the cytoplasm. It carries out the reaction 1-(5-phospho-beta-D-ribosyl)-ATP + diphosphate = 5-phospho-alpha-D-ribose 1-diphosphate + ATP. Its pathway is amino-acid biosynthesis; L-histidine biosynthesis; L-histidine from 5-phospho-alpha-D-ribose 1-diphosphate: step 1/9. Feedback inhibited by histidine. In terms of biological role, catalyzes the condensation of ATP and 5-phosphoribose 1-diphosphate to form N'-(5'-phosphoribosyl)-ATP (PR-ATP). Has a crucial role in the pathway because the rate of histidine biosynthesis seems to be controlled primarily by regulation of HisG enzymatic activity. The protein is ATP phosphoribosyltransferase of Salmonella agona (strain SL483).